The following is a 393-amino-acid chain: Protein Njmu-R1 (393 aa).

Residues 1 to 74 (MLPSLQESLD…AETPSGDDFS (74 aa)) form a disordered region. 2 positions are modified to phosphoserine: Ser-8 and Ser-18. Positions 9-24 (LDGDEKELESSEEGGS) are enriched in acidic residues.

As to quaternary structure, interacts with TBC1D23; this interaction may be indirect.

Its function is as follows. May have a role in spermatogenesis. This is Protein Njmu-R1 from Mus musculus (Mouse).